A 501-amino-acid polypeptide reads, in one-letter code: MVLVVDYGSQYSRLITRRIRENEVYSEVVFPDDKVDLSKVDAVILSGGPRSVYEEDAPKLPEWFQEYKGPVLAICYGMQLIVKELGGEVRRGRGEYGRTLVELSRDPIFEGIPEKVHVWMSHGDEVVRLPEGFHPIAVSETGVIAAATDGKRFWLLQFHPEVHHTEYGDRMISNFLFNVCKLEKNWKIGDLVEEKIRHIKETIGNKKAILALSGGVDSSVAAVLVHRAIGKNLVCVFVDHGLLRKNEREEVERVFKEHFDMNLVVVDARKRFLEKLRGVTDPEKKRKIIGEEFIRVFEEEAKKHDVEFLVQGTIYSDVIESAASGKTTAKIKSHHNVGGLPEKMNLKLVEPLRDLFKDEVRKVGKYLGIPDRIINRHPFPGPGLAVRVLGEVTEEKLEILREADYIFIETLRKHDYYDKVWQAFAVLLPIKSVGVKGDARAYEYVVALRAVNSVEGMTADWSRIPHDILDEAARRITREVKGVGRVVYDITSKPPATIEWE.

In terms of domain architecture, Glutamine amidotransferase type-1 spans Met-1–Asn-185. Catalysis depends on Cys-75, which acts as the Nucleophile. Active-site residues include His-159 and Glu-161. The region spanning Trp-186–Arg-376 is the GMPS ATP-PPase domain. Residue Ser-213–Ser-219 participates in ATP binding.

Homodimer.

It carries out the reaction XMP + L-glutamine + ATP + H2O = GMP + L-glutamate + AMP + diphosphate + 2 H(+). It participates in purine metabolism; GMP biosynthesis; GMP from XMP (L-Gln route): step 1/1. In terms of biological role, catalyzes the synthesis of GMP from XMP. The sequence is that of GMP synthase [glutamine-hydrolyzing] (guaA) from Thermotoga maritima (strain ATCC 43589 / DSM 3109 / JCM 10099 / NBRC 100826 / MSB8).